The primary structure comprises 158 residues: Low molecular weight phosphotyrosine protein phosphatase (158 aa).

Residue alanine 2 is modified to N-acetylalanine. Cysteine 13 (nucleophile) is an active-site residue. Residue arginine 19 is part of the active site. The Proton donor role is filled by aspartate 130. Residues tyrosine 132 and tyrosine 133 each carry the phosphotyrosine modification.

This sequence belongs to the low molecular weight phosphotyrosine protein phosphatase family. In terms of assembly, interacts with EPHA2; dephosphorylates EPHA2. Interacts with EPHB1. Interacts with the SH3 domain of SPTAN1. There is no interaction observed for isoform 2. In terms of processing, phosphorylated by LCK. Phosphorylation at Tyr-132 increases its phosphatase activity. As to expression, widely expressed with highest levels in brain and liver and lowest levels in muscle.

It localises to the cytoplasm. It catalyses the reaction O-phospho-L-tyrosyl-[protein] + H2O = L-tyrosyl-[protein] + phosphate. The enzyme catalyses a phosphate monoester + H2O = an alcohol + phosphate. Its activity is regulated as follows. Inhibited by sulfhydryl reagents. Functionally, acts on tyrosine phosphorylated proteins, low-MW aryl phosphates and natural and synthetic acyl phosphates with differences in substrate specificity between isoform 1 and isoform 2. This Mus musculus (Mouse) protein is Low molecular weight phosphotyrosine protein phosphatase.